The chain runs to 132 residues: Glycine cleavage system H protein (132 aa).

The Lipoyl-binding domain maps to 24–106; sequence IATIGLSAHA…YEEGWFIKVR (83 aa). Lysine 65 carries the N6-lipoyllysine modification.

It belongs to the GcvH family. As to quaternary structure, the glycine cleavage system is composed of four proteins: P, T, L and H. (R)-lipoate is required as a cofactor.

The glycine cleavage system catalyzes the degradation of glycine. The H protein shuttles the methylamine group of glycine from the P protein to the T protein. This chain is Glycine cleavage system H protein, found in Picosynechococcus sp. (strain ATCC 27264 / PCC 7002 / PR-6) (Agmenellum quadruplicatum).